A 358-amino-acid polypeptide reads, in one-letter code: Acetylxylan esterase / glucomannan deacetylase (358 aa).

A signal peptide spans 1 to 18 (MKLLFPILLLTGSYFLSA). C19 carries N-palmitoyl cysteine lipidation. The S-diacylglycerol cysteine moiety is linked to residue C19. S160 serves as the catalytic Nucleophile. Catalysis depends on charge relay system residues D333 and H335.

This sequence belongs to the carbohydrate esterase 2 (CE2) family.

It localises to the cell membrane. The catalysed reaction is Deacetylation of xylans and xylo-oligosaccharides.. It functions in the pathway glycan degradation; xylan degradation. Its function is as follows. Involved in the degradation of plant cell wall polysaccharides. Catalyzes the deacetylation of acetylated birchwood xylan and glucomannan, with equal efficiency, and of the synthetic substrate 4-nitrophenyl acetate (4-NPAc). Does not bind cellulose, cellohexaose and beta-glucan. The polypeptide is Acetylxylan esterase / glucomannan deacetylase (Cellvibrio japonicus (strain Ueda107) (Pseudomonas fluorescens subsp. cellulosa)).